The chain runs to 536 residues: Chaperonin GroEL (536 aa).

Residues 29 to 32 (TLGP), 86 to 90 (DGTTT), glycine 413, and aspartate 494 contribute to the ATP site.

The protein belongs to the chaperonin (HSP60) family. As to quaternary structure, forms a cylinder of 14 subunits composed of two heptameric rings stacked back-to-back. Interacts with the co-chaperonin GroES.

The protein localises to the cytoplasm. The catalysed reaction is ATP + H2O + a folded polypeptide = ADP + phosphate + an unfolded polypeptide.. Its function is as follows. Together with its co-chaperonin GroES, plays an essential role in assisting protein folding. The GroEL-GroES system forms a nano-cage that allows encapsulation of the non-native substrate proteins and provides a physical environment optimized to promote and accelerate protein folding. In Acholeplasma laidlawii (strain PG-8A), this protein is Chaperonin GroEL.